We begin with the raw amino-acid sequence, 683 residues long: DNA ligase (683 aa).

NAD(+) contacts are provided by residues Asp-43–Asp-47, Ser-92–Leu-93, and Glu-125. Catalysis depends on Lys-127, which acts as the N6-AMP-lysine intermediate. 4 residues coordinate NAD(+): Arg-148, Glu-185, Lys-303, and Lys-327. Zn(2+)-binding residues include Cys-421, Cys-424, Cys-439, and Cys-445. The BRCT domain maps to Ile-604–Asn-683.

This sequence belongs to the NAD-dependent DNA ligase family. LigA subfamily. Mg(2+) is required as a cofactor. The cofactor is Mn(2+).

It carries out the reaction NAD(+) + (deoxyribonucleotide)n-3'-hydroxyl + 5'-phospho-(deoxyribonucleotide)m = (deoxyribonucleotide)n+m + AMP + beta-nicotinamide D-nucleotide.. Its function is as follows. DNA ligase that catalyzes the formation of phosphodiester linkages between 5'-phosphoryl and 3'-hydroxyl groups in double-stranded DNA using NAD as a coenzyme and as the energy source for the reaction. It is essential for DNA replication and repair of damaged DNA. The protein is DNA ligase of Actinobacillus pleuropneumoniae serotype 5b (strain L20).